Here is a 114-residue protein sequence, read N- to C-terminus: uncharacterized protein (114 aa).

Positions 6–114 constitute an HIT domain; the sequence is IFKNIIQRKI…LGGKKLKSFS (109 aa).

This is an uncharacterized protein from Buchnera aphidicola subsp. Acyrthosiphon pisum (strain APS) (Acyrthosiphon pisum symbiotic bacterium).